Consider the following 1377-residue polypeptide: Neogenin (1377 aa).

Residues alanine 1–alanine 2 form the signal peptide. The Extracellular portion of the chain corresponds to alanine 3–leucine 1074. Ig-like C2-type domains follow at residues proline 21–lysine 114, proline 121–leucine 206, proline 198–threonine 305, and proline 310–isoleucine 395. Residue asparagine 42 is glycosylated (N-linked (GlcNAc...) asparagine). 3 disulfide bridges follow: cysteine 43–cysteine 98, cysteine 142–cysteine 190, and cysteine 239–cysteine 289. Asparagine 179 carries an N-linked (GlcNAc...) asparagine glycan. Residue asparagine 295 is glycosylated (N-linked (GlcNAc...) asparagine). Cysteines 331 and 379 form a disulfide. Fibronectin type-III domains are found at residues alanine 410 to glutamate 504, proline 510 to aspartate 600, alanine 605 to serine 700, valine 710 to threonine 800, proline 825 to threonine 924, and proline 926 to alanine 1023. N-linked (GlcNAc...) asparagine glycosylation is found at asparagine 439 and asparagine 458. Residues asparagine 608 and asparagine 684 are each glycosylated (N-linked (GlcNAc...) asparagine). N-linked (GlcNAc...) asparagine glycosylation is present at asparagine 878. A disordered region spans residues glycine 1010–threonine 1066. A compositionally biased stretch (basic and acidic residues) spans proline 1021–proline 1030. The segment covering serine 1056–threonine 1066 has biased composition (polar residues). Residues leucine 1075–phenylalanine 1095 traverse the membrane as a helical segment. Topologically, residues cysteine 1096 to alanine 1377 are cytoplasmic. The interval proline 1143–proline 1281 is disordered. Phosphoserine occurs at positions 1147 and 1163. 3 stretches are compositionally biased toward polar residues: residues proline 1160–asparagine 1176, glutamine 1213–threonine 1238, and alanine 1246–proline 1265. Threonine 1167 is subject to Phosphothreonine. Serine 1317 bears the Phosphoserine mark. Threonine 1320 is subject to Phosphothreonine. A phosphoserine mark is found at serine 1348, serine 1350, and serine 1351.

It belongs to the immunoglobulin superfamily. DCC family. In terms of assembly, interacts with MYO10. Interacts with RGMA and RGMB. Interacts with BMP2, BMP4, BMP6, and BMP7.

The protein localises to the cell membrane. Its function is as follows. Multi-functional cell surface receptor regulating cell adhesion in many diverse developmental processes, including neural tube and mammary gland formation, myogenesis and angiogenesis. Receptor for members of the BMP, netrin, and repulsive guidance molecule (RGM) families. Netrin-Neogenin interactions result in a chemoattractive axon guidance response and cell-cell adhesion, the interaction between NEO1/Neogenin and RGMa and RGMb induces a chemorepulsive response. This is Neogenin (Neo1) from Rattus norvegicus (Rat).